A 350-amino-acid polypeptide reads, in one-letter code: Homoserine O-succinyltransferase (350 aa).

Residue cysteine 146 is the Acyl-thioester intermediate of the active site. Substrate contacts are provided by lysine 167 and serine 196. Histidine 239 (proton acceptor) is an active-site residue. Residue glutamate 241 is part of the active site. A substrate-binding site is contributed by arginine 253.

Belongs to the MetA family.

It localises to the cytoplasm. It catalyses the reaction L-homoserine + succinyl-CoA = O-succinyl-L-homoserine + CoA. The protein operates within amino-acid biosynthesis; L-methionine biosynthesis via de novo pathway; O-succinyl-L-homoserine from L-homoserine: step 1/1. Its function is as follows. Transfers a succinyl group from succinyl-CoA to L-homoserine, forming succinyl-L-homoserine. This is Homoserine O-succinyltransferase from Cardiobacterium hominis (strain ATCC 15826 / DSM 8339 / NCTC 10426 / 6573).